The following is a 690-amino-acid chain: Protein arginine N-methyltransferase 7 (690 aa).

SAM-dependent MTase PRMT-type domains are found at residues 14–357 (QNSW…YSLW) and 366–690 (TKSV…QKKL).

It belongs to the class I-like SAM-binding methyltransferase superfamily. Protein arginine N-methyltransferase family. PRMT7 subfamily.

Essential arginine methyltransferase that can both catalyze the formation of omega-N monomethylarginine (MMA) and symmetrical dimethylarginine (sDMA). Specifically mediates the symmetrical dimethylation of arginine residues in the small nuclear ribonucleoproteins SmD1 and SmD3. The polypeptide is Protein arginine N-methyltransferase 7 (Art7) (Drosophila erecta (Fruit fly)).